The chain runs to 336 residues: Dihydroorotate dehydrogenase (quinone) (336 aa).

FMN-binding positions include 62 to 66 (AGLEK) and Thr86. Position 66 (Lys66) interacts with substrate. 111–115 (NRMGF) lines the substrate pocket. Residues Asn139 and Asn172 each contribute to the FMN site. Asn172 contacts substrate. Ser175 acts as the Nucleophile in catalysis. Asn177 is a substrate binding site. Positions 217 and 245 each coordinate FMN. 246-247 (NT) contributes to the substrate binding site. Residues Gly268, Gly297, and 318-319 (YS) contribute to the FMN site.

Belongs to the dihydroorotate dehydrogenase family. Type 2 subfamily. As to quaternary structure, monomer. Requires FMN as cofactor.

The protein resides in the cell membrane. It carries out the reaction (S)-dihydroorotate + a quinone = orotate + a quinol. It functions in the pathway pyrimidine metabolism; UMP biosynthesis via de novo pathway; orotate from (S)-dihydroorotate (quinone route): step 1/1. In terms of biological role, catalyzes the conversion of dihydroorotate to orotate with quinone as electron acceptor. This is Dihydroorotate dehydrogenase (quinone) from Aliivibrio salmonicida (strain LFI1238) (Vibrio salmonicida (strain LFI1238)).